A 504-amino-acid polypeptide reads, in one-letter code: Anaerobic nitric oxide reductase transcription regulator NorR (504 aa).

Asp57 carries the post-translational modification 4-aspartylphosphate. A Sigma-54 factor interaction domain is found at 187–416 (MIGLSPGMTQ…LEHAIHRAVV (230 aa)). ATP is bound by residues 215–222 (GETGTGKE) and 278–287 (ADNGTLFLDE). The H-T-H motif DNA-binding region spans 479 to 498 (WAACARMLETDVANLHRLAK).

Its pathway is nitrogen metabolism; nitric oxide reduction. Its function is as follows. Required for the expression of anaerobic nitric oxide (NO) reductase, acts as a transcriptional activator for at least the norVW operon. Activation also requires sigma-54. In Escherichia coli (strain ATCC 8739 / DSM 1576 / NBRC 3972 / NCIMB 8545 / WDCM 00012 / Crooks), this protein is Anaerobic nitric oxide reductase transcription regulator NorR.